Reading from the N-terminus, the 211-residue chain is Protein-methionine-sulfoxide reductase heme-binding subunit MsrQ (211 aa).

The next 5 helical transmembrane spans lie at L17–A37, L82–V102, P116–T136, F153–S173, and I178–F198.

This sequence belongs to the MsrQ family. Heterodimer of a catalytic subunit (MsrP) and a heme-binding subunit (MsrQ). FMN serves as cofactor. Heme b is required as a cofactor.

The protein resides in the cell inner membrane. Functionally, part of the MsrPQ system that repairs oxidized periplasmic proteins containing methionine sulfoxide residues (Met-O), using respiratory chain electrons. Thus protects these proteins from oxidative-stress damage caused by reactive species of oxygen and chlorine generated by the host defense mechanisms. MsrPQ is essential for the maintenance of envelope integrity under bleach stress, rescuing a wide series of structurally unrelated periplasmic proteins from methionine oxidation, including the primary periplasmic chaperone SurA and the lipoprotein Pal. MsrQ provides electrons for reduction to the reductase catalytic subunit MsrP, using the quinone pool of the respiratory chain. In Shigella boydii serotype 4 (strain Sb227), this protein is Protein-methionine-sulfoxide reductase heme-binding subunit MsrQ.